The following is an 83-amino-acid chain: Keratin-associated protein 21-2 (83 aa).

Interacts with hair keratins.

In terms of biological role, in the hair cortex, hair keratin intermediate filaments are embedded in an interfilamentous matrix, consisting of hair keratin-associated proteins (KRTAP), which are essential for the formation of a rigid and resistant hair shaft through their extensive disulfide bond cross-linking with abundant cysteine residues of hair keratins. The matrix proteins include the high-sulfur and high-glycine-tyrosine keratins. In Homo sapiens (Human), this protein is Keratin-associated protein 21-2 (KRTAP21-2).